Consider the following 441-residue polypeptide: MKEYALEIATKAKAVLPKLSSLNPAVKNSILIRVSQLLKENKELIQKENEKDIEFAKSINLSKAMIDRLKVGEKQINGMIKILEDVAKLKDPVGEITSMWTVDNGLKIGRMRVPLGVIFIIYESRPNVTIEAASLCFKSSNAVILRGGKEAIHTNKILSDLFRQAIREHVEGLEDAVCFVDKREREIVTELLQLEGLVDVAIPRGGESLIKAVSETAKISVIKHYKGVCSIYVDNEADLKKAYNIVYNAKVQRPSVCNAIENLVIHKDLLQDFWPKMAMVLLESDVELRCDEDSYEILQNKDFDSFKSKIKKATEKDYYEEFLDLILAVKTVNSLEEAMQFIEKYGSKHSDAIITENHTKAMRFLQEVDSAAVYVNASTRFTDGNEFGLGAEMGISTDKIHARGPMALRELTIEKFIIFGNGQLRENVGIPKELKEKLQID.

The protein belongs to the gamma-glutamyl phosphate reductase family.

It is found in the cytoplasm. The catalysed reaction is L-glutamate 5-semialdehyde + phosphate + NADP(+) = L-glutamyl 5-phosphate + NADPH + H(+). It participates in amino-acid biosynthesis; L-proline biosynthesis; L-glutamate 5-semialdehyde from L-glutamate: step 2/2. Functionally, catalyzes the NADPH-dependent reduction of L-glutamate 5-phosphate into L-glutamate 5-semialdehyde and phosphate. The product spontaneously undergoes cyclization to form 1-pyrroline-5-carboxylate. The chain is Gamma-glutamyl phosphate reductase from Hydrogenobaculum sp. (strain Y04AAS1).